Consider the following 239-residue polypeptide: Small ribosomal subunit protein eS6A (239 aa).

Residues Ser-235 and Ser-236 each carry the phosphoserine modification.

This sequence belongs to the eukaryotic ribosomal protein eS6 family. As to quaternary structure, component of the small ribosomal subunit (SSU). Mature yeast ribosomes consist of a small (40S) and a large (60S) subunit. The 40S small subunit contains 1 molecule of ribosomal RNA (18S rRNA) and at least 33 different proteins. The large 60S subunit contains 3 rRNA molecules (25S, 5.8S and 5S rRNA) and at least 46 different proteins. Interacts with snoRNA U3. uS11 interacts with MPP10. Component of the ribosomal small subunit (SSU) processome composed of at least 40 protein subunits and snoRNA U3. Phosphorylated.

Its subcellular location is the cytoplasm. In terms of biological role, component of the ribosome, a large ribonucleoprotein complex responsible for the synthesis of proteins in the cell. The small ribosomal subunit (SSU) binds messenger RNAs (mRNAs) and translates the encoded message by selecting cognate aminoacyl-transfer RNA (tRNA) molecules. The large subunit (LSU) contains the ribosomal catalytic site termed the peptidyl transferase center (PTC), which catalyzes the formation of peptide bonds, thereby polymerizing the amino acids delivered by tRNAs into a polypeptide chain. The nascent polypeptides leave the ribosome through a tunnel in the LSU and interact with protein factors that function in enzymatic processing, targeting, and the membrane insertion of nascent chains at the exit of the ribosomal tunnel. eS6 is involved in nucleolar processing of pre-18S ribosomal RNA and ribosome assembly. The chain is Small ribosomal subunit protein eS6A (rps601) from Schizosaccharomyces pombe (strain 972 / ATCC 24843) (Fission yeast).